The chain runs to 95 residues: Co-chaperonin GroES (95 aa).

This sequence belongs to the GroES chaperonin family. In terms of assembly, heptamer of 7 subunits arranged in a ring. Interacts with the chaperonin GroEL.

It localises to the cytoplasm. Functionally, together with the chaperonin GroEL, plays an essential role in assisting protein folding. The GroEL-GroES system forms a nano-cage that allows encapsulation of the non-native substrate proteins and provides a physical environment optimized to promote and accelerate protein folding. GroES binds to the apical surface of the GroEL ring, thereby capping the opening of the GroEL channel. The chain is Co-chaperonin GroES from Aliivibrio salmonicida (strain LFI1238) (Vibrio salmonicida (strain LFI1238)).